Here is a 455-residue protein sequence, read N- to C-terminus: Ribulose bisphosphate carboxylase large chain (455 aa).

Residue lysine 5 is modified to N6,N6,N6-trimethyllysine. Positions 114 and 164 each coordinate substrate. Lysine 166 acts as the Proton acceptor in catalysis. Position 168 (lysine 168) interacts with substrate. Residues lysine 192, aspartate 194, and glutamate 195 each coordinate Mg(2+). Lysine 192 bears the N6-carboxylysine mark. Histidine 285 functions as the Proton acceptor in the catalytic mechanism. Substrate-binding residues include arginine 286, histidine 318, and serine 370.

This sequence belongs to the RuBisCO large chain family. Type I subfamily. As to quaternary structure, heterohexadecamer of 8 large chains and 8 small chains; disulfide-linked. The disulfide link is formed within the large subunit homodimers. Mg(2+) serves as cofactor. In terms of processing, the disulfide bond which can form in the large chain dimeric partners within the hexadecamer appears to be associated with oxidative stress and protein turnover.

Its subcellular location is the plastid. It is found in the chloroplast. It carries out the reaction 2 (2R)-3-phosphoglycerate + 2 H(+) = D-ribulose 1,5-bisphosphate + CO2 + H2O. The catalysed reaction is D-ribulose 1,5-bisphosphate + O2 = 2-phosphoglycolate + (2R)-3-phosphoglycerate + 2 H(+). In terms of biological role, ruBisCO catalyzes two reactions: the carboxylation of D-ribulose 1,5-bisphosphate, the primary event in carbon dioxide fixation, as well as the oxidative fragmentation of the pentose substrate in the photorespiration process. Both reactions occur simultaneously and in competition at the same active site. This is Ribulose bisphosphate carboxylase large chain from Senna didymobotrya (Popcorn cassia).